Reading from the N-terminus, the 290-residue chain is N-acetylneuraminate lyase (290 aa).

Aceneuramate is bound by residues S44 and T45. Residue Y133 is the Proton donor of the active site. Residue K161 is the Schiff-base intermediate with substrate of the active site. Aceneuramate is bound by residues T163, G185, D187, E188, and S204.

It belongs to the DapA family. NanA subfamily. In terms of assembly, homotetramer.

The protein resides in the cytoplasm. The enzyme catalyses aceneuramate = aldehydo-N-acetyl-D-mannosamine + pyruvate. Its pathway is amino-sugar metabolism; N-acetylneuraminate degradation; D-fructose 6-phosphate from N-acetylneuraminate: step 1/5. Catalyzes the reversible aldol cleavage of N-acetylneuraminic acid (sialic acid; Neu5Ac) to form pyruvate and N-acetylmannosamine (ManNAc) via a Schiff base intermediate. The polypeptide is N-acetylneuraminate lyase (Fusobacterium nucleatum subsp. nucleatum (strain ATCC 25586 / DSM 15643 / BCRC 10681 / CIP 101130 / JCM 8532 / KCTC 2640 / LMG 13131 / VPI 4355)).